The primary structure comprises 445 residues: Methionine aminopeptidase 2 (445 aa).

A disordered region spans residues 1–80 (MAAQVASGVG…TSKVQTEPPR (80 aa)). A compositionally biased stretch (basic residues) spans 57–71 (AKKKKKKTKKKKKGT). Position 195 (His-195) interacts with substrate. A divalent metal cation is bound by residues Asp-215, Asp-226, and His-295. Position 303 (His-303) interacts with substrate. The a divalent metal cation site is built by Glu-331 and Glu-426.

This sequence belongs to the peptidase M24A family. Methionine aminopeptidase eukaryotic type 2 subfamily. It depends on Co(2+) as a cofactor. The cofactor is Zn(2+). Requires Mn(2+) as cofactor. Fe(2+) is required as a cofactor.

It is found in the cytoplasm. It catalyses the reaction Release of N-terminal amino acids, preferentially methionine, from peptides and arylamides.. In terms of biological role, cotranslationally removes the N-terminal methionine from nascent proteins. The N-terminal methionine is often cleaved when the second residue in the primary sequence is small and uncharged (Met-Ala-, Cys, Gly, Pro, Ser, Thr, or Val). The sequence is that of Methionine aminopeptidase 2 from Paracoccidioides brasiliensis (strain Pb03).